The sequence spans 432 residues: Bifunctional protein GlmU (432 aa).

Positions 1 to 224 (MSEISVIILA…EENFMGINDK (224 aa)) are pyrophosphorylase. Residues 9–12 (LAAG), lysine 23, and 82–83 (GT) each bind UDP-N-acetyl-alpha-D-glucosamine. Aspartate 103 contributes to the Mg(2+) binding site. Positions 136, 150, 165, and 222 each coordinate UDP-N-acetyl-alpha-D-glucosamine. Asparagine 222 serves as a coordination point for Mg(2+). Positions 225–245 (FALSKAETIIQNEIKENLMKN) are linker. Positions 246-432 (GVLMRLPESI…FFAKFFKEIK (187 aa)) are N-acetyltransferase. 2 residues coordinate UDP-N-acetyl-alpha-D-glucosamine: arginine 309 and lysine 326. Histidine 337 serves as the catalytic Proton acceptor. Residues tyrosine 340 and asparagine 351 each contribute to the UDP-N-acetyl-alpha-D-glucosamine site. Acetyl-CoA contacts are provided by residues 360–361 (NY), serine 379, alanine 397, and arginine 414.

In the N-terminal section; belongs to the N-acetylglucosamine-1-phosphate uridyltransferase family. The protein in the C-terminal section; belongs to the transferase hexapeptide repeat family. Homotrimer. The cofactor is Mg(2+).

Its subcellular location is the cytoplasm. It carries out the reaction alpha-D-glucosamine 1-phosphate + acetyl-CoA = N-acetyl-alpha-D-glucosamine 1-phosphate + CoA + H(+). The catalysed reaction is N-acetyl-alpha-D-glucosamine 1-phosphate + UTP + H(+) = UDP-N-acetyl-alpha-D-glucosamine + diphosphate. It functions in the pathway nucleotide-sugar biosynthesis; UDP-N-acetyl-alpha-D-glucosamine biosynthesis; N-acetyl-alpha-D-glucosamine 1-phosphate from alpha-D-glucosamine 6-phosphate (route II): step 2/2. It participates in nucleotide-sugar biosynthesis; UDP-N-acetyl-alpha-D-glucosamine biosynthesis; UDP-N-acetyl-alpha-D-glucosamine from N-acetyl-alpha-D-glucosamine 1-phosphate: step 1/1. The protein operates within bacterial outer membrane biogenesis; LPS lipid A biosynthesis. Catalyzes the last two sequential reactions in the de novo biosynthetic pathway for UDP-N-acetylglucosamine (UDP-GlcNAc). The C-terminal domain catalyzes the transfer of acetyl group from acetyl coenzyme A to glucosamine-1-phosphate (GlcN-1-P) to produce N-acetylglucosamine-1-phosphate (GlcNAc-1-P), which is converted into UDP-GlcNAc by the transfer of uridine 5-monophosphate (from uridine 5-triphosphate), a reaction catalyzed by the N-terminal domain. The protein is Bifunctional protein GlmU of Campylobacter hominis (strain ATCC BAA-381 / DSM 21671 / CCUG 45161 / LMG 19568 / NCTC 13146 / CH001A).